Reading from the N-terminus, the 328-residue chain is Probable tRNA pseudouridine synthase B (328 aa).

The active-site Nucleophile is D71. The 76-residue stretch at L238–M313 folds into the PUA domain.

Belongs to the pseudouridine synthase TruB family. Type 2 subfamily.

It catalyses the reaction uridine(55) in tRNA = pseudouridine(55) in tRNA. Its function is as follows. Could be responsible for synthesis of pseudouridine from uracil-55 in the psi GC loop of transfer RNAs. The chain is Probable tRNA pseudouridine synthase B from Pyrobaculum islandicum (strain DSM 4184 / JCM 9189 / GEO3).